A 323-amino-acid chain; its full sequence is ATP synthase gamma chain (323 aa).

This sequence belongs to the ATPase gamma chain family. As to quaternary structure, F-type ATPases have 2 components, CF(1) - the catalytic core - and CF(0) - the membrane proton channel. CF(1) has five subunits: alpha(3), beta(3), gamma(1), delta(1), epsilon(1). CF(0) has three main subunits: a, b and c.

The protein localises to the cell membrane. Its function is as follows. Produces ATP from ADP in the presence of a proton gradient across the membrane. The gamma chain is believed to be important in regulating ATPase activity and the flow of protons through the CF(0) complex. The protein is ATP synthase gamma chain of Nocardia farcinica (strain IFM 10152).